The sequence spans 451 residues: tRNA(Ile)-lysidine synthase (451 aa).

21-26 (SGGLDS) provides a ligand contact to ATP.

It belongs to the tRNA(Ile)-lysidine synthase family.

Its subcellular location is the cytoplasm. It carries out the reaction cytidine(34) in tRNA(Ile2) + L-lysine + ATP = lysidine(34) in tRNA(Ile2) + AMP + diphosphate + H(+). In terms of biological role, ligates lysine onto the cytidine present at position 34 of the AUA codon-specific tRNA(Ile) that contains the anticodon CAU, in an ATP-dependent manner. Cytidine is converted to lysidine, thus changing the amino acid specificity of the tRNA from methionine to isoleucine. In Yersinia pseudotuberculosis serotype O:1b (strain IP 31758), this protein is tRNA(Ile)-lysidine synthase.